Consider the following 92-residue polypeptide: Progonadoliberin-1 (92 aa).

The first 23 residues, 1–23, serve as a signal peptide directing secretion; the sequence is MEKSRKILVGVLLFTASVAICLA. Q24 is modified (pyrrolidone carboxylic acid). G33 bears the Glycine amide mark.

It belongs to the GnRH family.

The protein localises to the secreted. Its function is as follows. Stimulates the secretion of gonadotropins. In Gallus gallus (Chicken), this protein is Progonadoliberin-1 (GNRH1).